We begin with the raw amino-acid sequence, 290 residues long: Dual-specificity RNA pseudouridine synthase RluF (290 aa).

Residues 7 to 72 (VRLNKYISES…EAEDLVLIAL (66 aa)) form the S4 RNA-binding domain. 2 interaction with RNA regions span residues 105–108 (RLDK) and 187–190 (RQIR). Catalysis depends on D107, which acts as the Nucleophile. A disordered region spans residues 241–290 (SEAKPKAKAKPKTAGIKRPVVKMEKTAEKGGRPASNGKRFTSPGRKKKGR). The span at 261–271 (VKMEKTAEKGG) shows a compositional bias: basic and acidic residues.

Belongs to the pseudouridine synthase RsuA family. As to quaternary structure, monomer.

It catalyses the reaction uridine(2604) in 23S rRNA = pseudouridine(2604) in 23S rRNA. The enzyme catalyses uridine(35) in tRNA(Tyr) = pseudouridine(35) in tRNA(Tyr). In terms of biological role, dual specificity enzyme that catalyzes the synthesis of pseudouridine from uracil-2604 in 23S ribosomal RNA and from uracil-35 in the anticodon of tRNA(Tyr). The polypeptide is Dual-specificity RNA pseudouridine synthase RluF (rluF) (Escherichia coli O157:H7).